The following is a 608-amino-acid chain: Glutamine--fructose-6-phosphate aminotransferase [isomerizing] (608 aa).

Residue Cys-2 is the Nucleophile; for GATase activity of the active site. The Glutamine amidotransferase type-2 domain occupies 2 to 217; it reads CGIVGIVGHK…DGDWAVVGKT (216 aa). SIS domains are found at residues 283–422 and 456–598; these read TDID…ARGT and LSRE…VDQP. Residue Lys-603 is the For Fru-6P isomerization activity of the active site.

It is found in the cytoplasm. It carries out the reaction D-fructose 6-phosphate + L-glutamine = D-glucosamine 6-phosphate + L-glutamate. In terms of biological role, involved in the production of the root hair deformation (HAD) factor specifically on medicago. This is Glutamine--fructose-6-phosphate aminotransferase [isomerizing] (nodM) from Rhizobium leguminosarum bv. viciae.